The primary structure comprises 214 residues: NADH-quinone oxidoreductase subunit C (214 aa).

Belongs to the complex I 30 kDa subunit family. NDH-1 is composed of 14 different subunits. Subunits NuoB, C, D, E, F, and G constitute the peripheral sector of the complex.

Its subcellular location is the cell inner membrane. The catalysed reaction is a quinone + NADH + 5 H(+)(in) = a quinol + NAD(+) + 4 H(+)(out). Its function is as follows. NDH-1 shuttles electrons from NADH, via FMN and iron-sulfur (Fe-S) centers, to quinones in the respiratory chain. The immediate electron acceptor for the enzyme in this species is believed to be ubiquinone. Couples the redox reaction to proton translocation (for every two electrons transferred, four hydrogen ions are translocated across the cytoplasmic membrane), and thus conserves the redox energy in a proton gradient. This Francisella tularensis subsp. tularensis (strain WY96-3418) protein is NADH-quinone oxidoreductase subunit C.